The sequence spans 333 residues: Ketol-acid reductoisomerase (NADP(+)) (333 aa).

Positions 2–182 (ANIYYDSDCD…GGGRAGILET (181 aa)) constitute a KARI N-terminal Rossmann domain. Residues 25 to 28 (YGSQ), Lys48, Ser51, Ser53, and 83 to 86 (DTIQ) contribute to the NADP(+) site. His108 is an active-site residue. Gly134 serves as a coordination point for NADP(+). One can recognise a KARI C-terminal knotted domain in the interval 183–331 (SFREETETDL…KKLRSMMKWL (149 aa)). Mg(2+)-binding residues include Asp191, Glu195, Glu227, and Glu231. Ser252 is a substrate binding site.

The protein belongs to the ketol-acid reductoisomerase family. Mg(2+) is required as a cofactor.

It carries out the reaction (2R)-2,3-dihydroxy-3-methylbutanoate + NADP(+) = (2S)-2-acetolactate + NADPH + H(+). The catalysed reaction is (2R,3R)-2,3-dihydroxy-3-methylpentanoate + NADP(+) = (S)-2-ethyl-2-hydroxy-3-oxobutanoate + NADPH + H(+). It participates in amino-acid biosynthesis; L-isoleucine biosynthesis; L-isoleucine from 2-oxobutanoate: step 2/4. The protein operates within amino-acid biosynthesis; L-valine biosynthesis; L-valine from pyruvate: step 2/4. In terms of biological role, involved in the biosynthesis of branched-chain amino acids (BCAA). Catalyzes an alkyl-migration followed by a ketol-acid reduction of (S)-2-acetolactate (S2AL) to yield (R)-2,3-dihydroxy-isovalerate. In the isomerase reaction, S2AL is rearranged via a Mg-dependent methyl migration to produce 3-hydroxy-3-methyl-2-ketobutyrate (HMKB). In the reductase reaction, this 2-ketoacid undergoes a metal-dependent reduction by NADPH to yield (R)-2,3-dihydroxy-isovalerate. This Leptospira interrogans serogroup Icterohaemorrhagiae serovar copenhageni (strain Fiocruz L1-130) protein is Ketol-acid reductoisomerase (NADP(+)).